A 261-amino-acid polypeptide reads, in one-letter code: uncharacterized protein (261 aa).

Positions 1-22 are cleaved as a signal peptide; that stretch reads MRDSKRVVLYISIIVLSIFIIG. The N-palmitoyl cysteine moiety is linked to residue Cys23. Residue Cys23 is the site of S-diacylglycerol cysteine attachment.

This sequence belongs to the staphylococcal tandem lipoprotein family.

It localises to the cell membrane. This is an uncharacterized protein from Staphylococcus aureus (strain Mu50 / ATCC 700699).